A 233-amino-acid polypeptide reads, in one-letter code: tRNA (guanine-N(7)-)-methyltransferase (233 aa).

The segment at 1–22 is disordered; it reads MIDENHPMRAAGNFFGRRHGKP. Positions 64, 89, 116, and 138 each coordinate S-adenosyl-L-methionine. Asp-138 is an active-site residue. Residues Lys-142, Asp-174, and 212-215 contribute to the substrate site; that span reads TRYE.

The protein belongs to the class I-like SAM-binding methyltransferase superfamily. TrmB family.

It catalyses the reaction guanosine(46) in tRNA + S-adenosyl-L-methionine = N(7)-methylguanosine(46) in tRNA + S-adenosyl-L-homocysteine. It participates in tRNA modification; N(7)-methylguanine-tRNA biosynthesis. Its function is as follows. Catalyzes the formation of N(7)-methylguanine at position 46 (m7G46) in tRNA. The chain is tRNA (guanine-N(7)-)-methyltransferase from Brucella abortus (strain 2308).